Here is a 187-residue protein sequence, read N- to C-terminus: Dihydrofolate reductase 2, mitochondrial (187 aa).

One can recognise a DHFR domain in the interval leucine 4–lysine 185. Residues alanine 10 and glycine 16–aspartate 22 contribute to the NADP(+) site. Substrate is bound at residue glutamate 31–glutamine 36. NADP(+) is bound at residue arginine 55–threonine 57. Arginine 71 lines the substrate pocket. Residues serine 77–glutamate 79 and glycine 117–glutamate 124 each bind NADP(+).

It belongs to the dihydrofolate reductase family. As to expression, expressed in numerous cell lines.

The protein resides in the mitochondrion. It is found in the mitochondrion matrix. It localises to the mitochondrion inner membrane. It carries out the reaction (6S)-5,6,7,8-tetrahydrofolate + NADP(+) = 7,8-dihydrofolate + NADPH + H(+). It functions in the pathway cofactor biosynthesis; tetrahydrofolate biosynthesis; 5,6,7,8-tetrahydrofolate from 7,8-dihydrofolate: step 1/1. Key enzyme in folate metabolism. Contributes to the de novo mitochondrial thymidylate biosynthesis pathway. Required to prevent uracil accumulation in mtDNA. Binds its own mRNA and that of DHFR. This is Dihydrofolate reductase 2, mitochondrial from Homo sapiens (Human).